A 113-amino-acid chain; its full sequence is Death-associated protein-like 1.S (113 aa).

Residues 1–53 (MTKELKVQSSPQALKAGHLPAVKAGGMRVSKKQGNDENSAPEKNAKKTLQEKP) are disordered.

Belongs to the DAP-DAPL1 family. In terms of assembly, associates with ribosomes; preventing translation. Interacts with eiF5a (eif5a and eif5a2); preventing translation.

In terms of biological role, ribosome-binding protein that promotes ribosome hibernation, a process during which ribosomes are stabilized in an inactive state and preserved from proteasomal degradation. Acts via its association with eiF5a (eif5a and eif5a2) at the polypeptide exit tunnel of the ribosome, preventing mRNA translation. Plays a key role in ribosome hibernation in the mature egg by preventing mRNA translation, leading to ribosome inactivation. Ribosomes, which are produced in large quantities during oogenesis, are stored and translationally repressed in the egg and early embryo. This is Death-associated protein-like 1.S (dapl1.S) from Xenopus laevis (African clawed frog).